The primary structure comprises 352 residues: Organic solute transporter subunit alpha (352 aa).

The Extracellular segment spans residues 1–45; sequence MDVAHPEEVTRFSPDILMEKFNVSEACFLPPPISIQLILQLTWLD. Residue N22 is glycosylated (N-linked (GlcNAc...) asparagine). Residues 46–66 traverse the membrane as a helical segment; the sequence is IGVFAALTAMTVLTIAIYLEI. Residues 67–82 are Cytoplasmic-facing; it reads VCYLMDKVKCPIKRKT. Residues 83–103 form a helical membrane-spanning segment; that stretch reads LMWNSAAPTVIAITSCLGLWV. Topologically, residues 104 to 108 are extracellular; sequence PRAIM. A helical membrane pass occupies residues 109-129; sequence FVDMAAAMYFGVGFYLMLLII. Residues 130–173 lie on the Cytoplasmic side of the membrane; the sequence is VQGYGGEEAMLQHLATHTIRISTGPCCCCCPCLPHIHLTRQKYK. The chain crosses the membrane as a helical span at residues 174-194; sequence IFVLGAFQVAFLRPALFLLGV. Residues 195–210 are Extracellular-facing; that stretch reads VLWTNGLYDPDDWSST. Residues 211–231 form a helical membrane-spanning segment; that stretch reads SIFLWLNLFLGVSTILGLWPV. The Cytoplasmic segment spans residues 232-250; the sequence is NVLFRHSKVLMADQKLTCK. Residues 251–271 form a helical membrane-spanning segment; it reads FALFQAILILSSLQNSIIGTL. Residues 272 to 294 lie on the Extracellular side of the membrane; it reads AGAGHIGCAPPYSARTRGQQMNN. A helical transmembrane segment spans residues 295–312; that stretch reads QLLIIEMFFVGILTRISY. The Cytoplasmic segment spans residues 313-352; the sequence is RKRDDRPGHRHVGEVQQIVRECDQPAIADQQADHSSISHI.

The protein belongs to the OST-alpha family. As to quaternary structure, interacts with slc51b. The Ost-alpha/Ost-beta complex is a heterodimer composed of alpha (slc51a) and beta (slc51b) subunit. In terms of tissue distribution, expressed in liver.

Its subcellular location is the cell membrane. It is found in the endoplasmic reticulum membrane. The enzyme catalyses taurocholate(out) = taurocholate(in). It carries out the reaction prostaglandin E2(out) = prostaglandin E2(in). It catalyses the reaction estrone 3-sulfate(out) = estrone 3-sulfate(in). The catalysed reaction is dehydroepiandrosterone 3-sulfate(out) = dehydroepiandrosterone 3-sulfate(in). The enzyme catalyses tauroursodeoxycholate(out) = tauroursodeoxycholate(in). It carries out the reaction glycoursodeoxycholate(out) = glycoursodeoxycholate(in). It catalyses the reaction glycocholate(out) = glycocholate(in). The catalysed reaction is taurochenodeoxycholate(out) = taurochenodeoxycholate(in). The enzyme catalyses glycochenodeoxycholate(out) = glycochenodeoxycholate(in). It carries out the reaction taurodeoxycholate(out) = taurodeoxycholate(in). It catalyses the reaction glycodeoxycholate(out) = glycodeoxycholate(in). In terms of biological role, essential component of the Ost-alpha/Ost-beta complex, a heterodimer that acts as the intestinal basolateral transporter responsible for the translocation of bile acids (such as taurocholate), steroids (such as estrone sulfate), and eicosanoids (such as prostaglandin E2). This is Organic solute transporter subunit alpha (slc51a) from Leucoraja erinaceus (Little skate).